The sequence spans 360 residues: Histidinol-phosphate aminotransferase (360 aa).

Lys223 bears the N6-(pyridoxal phosphate)lysine mark.

This sequence belongs to the class-II pyridoxal-phosphate-dependent aminotransferase family. Histidinol-phosphate aminotransferase subfamily. Homodimer. Pyridoxal 5'-phosphate serves as cofactor.

The catalysed reaction is L-histidinol phosphate + 2-oxoglutarate = 3-(imidazol-4-yl)-2-oxopropyl phosphate + L-glutamate. Its pathway is amino-acid biosynthesis; L-histidine biosynthesis; L-histidine from 5-phospho-alpha-D-ribose 1-diphosphate: step 7/9. The polypeptide is Histidinol-phosphate aminotransferase (hisC) (Bacillus subtilis (strain 168)).